The chain runs to 119 residues: Small ribosomal subunit protein bS6 (119 aa).

The disordered stretch occupies residues 95-119; that stretch reads AVTEPSPLAKGNEKREDRKESEDAE. Basic and acidic residues predominate over residues 105 to 119; the sequence is GNEKREDRKESEDAE.

The protein belongs to the bacterial ribosomal protein bS6 family.

In terms of biological role, binds together with bS18 to 16S ribosomal RNA. This chain is Small ribosomal subunit protein bS6, found in Halorhodospira halophila (strain DSM 244 / SL1) (Ectothiorhodospira halophila (strain DSM 244 / SL1)).